The chain runs to 408 residues: L,D-transpeptidase 2 (408 aa).

The signal sequence occupies residues 1–34; that stretch reads MPKVGIAAQAGRTRVRRAWLTALMMTAVMIGAVA. Residue C35 is the site of N-palmitoyl cysteine attachment. C35 carries the S-diacylglycerol cysteine lipid modification. 3 residues coordinate Ca(2+): D232, E235, and G236. One can recognise a L,D-TPase catalytic domain in the interval 253–378; it reads VIATADDNTK…VKRGDIVEVV (126 aa). Substrate is bound by residues Y318 and 331–332; that span reads SG. H336 functions as the Proton donor/acceptor in the catalytic mechanism. C354 (nucleophile) is an active-site residue. N356 contributes to the substrate binding site.

Monomer.

It is found in the cell membrane. It participates in cell wall biogenesis; peptidoglycan biosynthesis. Is irreversibly inactivated by the beta-lactams carbapenems via the formation of a covalent adduct resulting from acylation of the catalytic Cys. Generates 3-&gt;3 cross-links in peptidoglycan, catalyzing the cleavage of the mDap(3)-D-Ala(4) bond of a tetrapeptide donor stem and the formation of a bond between the carbonyl of mDap(3) of the donor stem and the side chain of mDap(3) of the acceptor stem. Is specific for donor substrates containing a stem tetrapeptide since it cannot use pentapeptide stems. Is essential for virulence in a mouse model of acute infection. The sequence is that of L,D-transpeptidase 2 (ldtB) from Mycobacterium tuberculosis (strain CDC 1551 / Oshkosh).